The following is a 125-amino-acid chain: uncharacterized protein (125 aa).

The protein resides in the plastid. This is an uncharacterized protein from Euglena longa (Euglenophycean alga).